The following is a 191-amino-acid chain: Thymidine kinase (191 aa).

Residues Gly-15–Thr-22 and Asp-88–Gln-91 each bind ATP. The active-site Proton acceptor is Glu-89. Residues Cys-145, Cys-148, Cys-183, and Cys-186 each contribute to the Zn(2+) site.

It belongs to the thymidine kinase family. Homotetramer.

It localises to the cytoplasm. It carries out the reaction thymidine + ATP = dTMP + ADP + H(+). The protein is Thymidine kinase of Clostridium botulinum (strain Loch Maree / Type A3).